The primary structure comprises 263 residues: 5'-nucleotidase SurE (263 aa).

Residues Asp15, Asp16, Ser46, and Asn102 each contribute to the a divalent metal cation site.

This sequence belongs to the SurE nucleotidase family. A divalent metal cation serves as cofactor.

Its subcellular location is the cytoplasm. It catalyses the reaction a ribonucleoside 5'-phosphate + H2O = a ribonucleoside + phosphate. Its function is as follows. Nucleotidase that shows phosphatase activity on nucleoside 5'-monophosphates. The protein is 5'-nucleotidase SurE of Chlorobaculum tepidum (strain ATCC 49652 / DSM 12025 / NBRC 103806 / TLS) (Chlorobium tepidum).